The sequence spans 196 residues: Imidazoleglycerol-phosphate dehydratase (196 aa).

This sequence belongs to the imidazoleglycerol-phosphate dehydratase family.

The protein localises to the cytoplasm. It catalyses the reaction D-erythro-1-(imidazol-4-yl)glycerol 3-phosphate = 3-(imidazol-4-yl)-2-oxopropyl phosphate + H2O. It functions in the pathway amino-acid biosynthesis; L-histidine biosynthesis; L-histidine from 5-phospho-alpha-D-ribose 1-diphosphate: step 6/9. The polypeptide is Imidazoleglycerol-phosphate dehydratase (Clostridium botulinum (strain 657 / Type Ba4)).